The primary structure comprises 138 residues: ATP synthase epsilon chain (138 aa).

The protein belongs to the ATPase epsilon chain family. F-type ATPases have 2 components, CF(1) - the catalytic core - and CF(0) - the membrane proton channel. CF(1) has five subunits: alpha(3), beta(3), gamma(1), delta(1), epsilon(1). CF(0) has three main subunits: a, b and c.

The protein resides in the cell inner membrane. Its function is as follows. Produces ATP from ADP in the presence of a proton gradient across the membrane. In Vesicomyosocius okutanii subsp. Calyptogena okutanii (strain HA), this protein is ATP synthase epsilon chain.